A 327-amino-acid chain; its full sequence is FERM domain-containing protein 6 (327 aa).

The FERM domain occupies arginine 16–glutamine 320.

The protein resides in the cytoplasm. It localises to the cell membrane. The polypeptide is FERM domain-containing protein 6 (Frmd6) (Rattus norvegicus (Rat)).